The following is a 223-amino-acid chain: Cytidylate kinase (223 aa).

Glycine 10–serine 18 provides a ligand contact to ATP.

The protein belongs to the cytidylate kinase family. Type 1 subfamily.

It is found in the cytoplasm. The catalysed reaction is CMP + ATP = CDP + ADP. The enzyme catalyses dCMP + ATP = dCDP + ADP. The protein is Cytidylate kinase of Pseudothermotoga lettingae (strain ATCC BAA-301 / DSM 14385 / NBRC 107922 / TMO) (Thermotoga lettingae).